The primary structure comprises 233 residues: Charged multivesicular body protein 4c (233 aa).

Disordered stretches follow at residues 1–24 and 173–233; these read MSKL…SPQE and QEEL…AWAT. The segment at 1–153 is intramolecular interaction with C-terminus; it reads MSKLGKFFKG…EISEAFSQRV (153 aa). Residues 125 to 183 adopt a coiled-coil conformation; the sequence is LNKIDDLMQEITEQQDIAQEISEAFSQRVGFGDDFDEDELMAELEELEQEELNKKMTNI. The intramolecular interaction with N-terminus stretch occupies residues 154–233; it reads GFGDDFDEDE…DIKQLAAWAT (80 aa). Low complexity predominate over residues 204–216; sequence SSTARRSRAASSQ. Serine 210 is modified (phosphoserine; by AURKB).

This sequence belongs to the SNF7 family. In terms of assembly, probable core component of the endosomal sorting required for transport complex III (ESCRT-III). ESCRT-III components are thought to multimerize to form a flat lattice on the perimeter membrane of the endosome. Several assembly forms of ESCRT-III may exist that interact and act sequentially. Self-associates. Interacts with CHMP2A. Interacts with CHMP4A. Interacts with CHMP4B. Interacts with CHMP6. Interacts with VPS4A. Interacts with PDCD6IP; the interaction is direct. Phosphorylated at Ser-210 by AURKB during cytokinesis: together with ZFYVE19/ANCHR, phosphorylated CHMP4C retains abscission-competent VPS4 (VPS4A and/or VPS4B) at the midbody ring until abscission checkpoint signaling is terminated at late cytokinesis. As to expression, expressed in heart, spleen and kidney.

It is found in the cytoplasm. The protein resides in the cytosol. It localises to the late endosome membrane. The protein localises to the midbody. Its subcellular location is the midbody ring. In terms of biological role, probable core component of the endosomal sorting required for transport complex III (ESCRT-III) which is involved in multivesicular bodies (MVBs) formation and sorting of endosomal cargo proteins into MVBs. MVBs contain intraluminal vesicles (ILVs) that are generated by invagination and scission from the limiting membrane of the endosome and mostly are delivered to lysosomes enabling degradation of membrane proteins, such as stimulated growth factor receptors, lysosomal enzymes and lipids. The MVB pathway appears to require the sequential function of ESCRT-O, -I,-II and -III complexes. ESCRT-III proteins mostly dissociate from the invaginating membrane before the ILV is released. The ESCRT machinery also functions in topologically equivalent membrane fission events, such as the terminal stages of cytokinesis and the budding of enveloped viruses (HIV-1 and other lentiviruses). Key component of the cytokinesis checkpoint, a process required to delay abscission to prevent both premature resolution of intercellular chromosome bridges and accumulation of DNA damage: upon phosphorylation by AURKB, together with ZFYVE19/ANCHR, retains abscission-competent VPS4 (VPS4A and/or VPS4B) at the midbody ring until abscission checkpoint signaling is terminated at late cytokinesis. Deactivation of AURKB results in dephosphorylation of CHMP4C followed by its dissociation from ANCHR and VPS4 and subsequent abscission. ESCRT-III proteins are believed to mediate the necessary vesicle extrusion and/or membrane fission activities, possibly in conjunction with the AAA ATPase VPS4. Involved in HIV-1 p6- and p9-dependent virus release. CHMP4A/B/C are required for the exosomal release of SDCBP, CD63 and syndecan. The protein is Charged multivesicular body protein 4c (CHMP4C) of Homo sapiens (Human).